The sequence spans 157 residues: Urease accessory protein UreE (157 aa).

The protein belongs to the UreE family.

The protein resides in the cytoplasm. In terms of biological role, involved in urease metallocenter assembly. Binds nickel. Probably functions as a nickel donor during metallocenter assembly. This chain is Urease accessory protein UreE, found in Corynebacterium glutamicum (strain ATCC 13032 / DSM 20300 / JCM 1318 / BCRC 11384 / CCUG 27702 / LMG 3730 / NBRC 12168 / NCIMB 10025 / NRRL B-2784 / 534).